A 122-amino-acid polypeptide reads, in one-letter code: Large ribosomal subunit protein uL14 (122 aa).

It belongs to the universal ribosomal protein uL14 family. In terms of assembly, part of the 50S ribosomal subunit. Forms a cluster with proteins L3 and L19. In the 70S ribosome, L14 and L19 interact and together make contacts with the 16S rRNA in bridges B5 and B8.

In terms of biological role, binds to 23S rRNA. Forms part of two intersubunit bridges in the 70S ribosome. This is Large ribosomal subunit protein uL14 from Desulfosudis oleivorans (strain DSM 6200 / JCM 39069 / Hxd3) (Desulfococcus oleovorans).